The following is a 143-amino-acid chain: Flagellar assembly factor FliW (143 aa).

It belongs to the FliW family. As to quaternary structure, interacts with translational regulator CsrA and flagellin(s).

The protein resides in the cytoplasm. In terms of biological role, acts as an anti-CsrA protein, binds CsrA and prevents it from repressing translation of its target genes, one of which is flagellin. Binds to flagellin and participates in the assembly of the flagellum. In Clostridium botulinum (strain Okra / Type B1), this protein is Flagellar assembly factor FliW.